Reading from the N-terminus, the 256-residue chain is Small ribosomal subunit protein uS2 (256 aa).

The tract at residues 229-256 (PVDDNGDYGDFDEAIDEYADETDASESE) is disordered. Acidic residues predominate over residues 232 to 256 (DNGDYGDFDEAIDEYADETDASESE).

Belongs to the universal ribosomal protein uS2 family.

The sequence is that of Small ribosomal subunit protein uS2 from Picosynechococcus sp. (strain ATCC 27264 / PCC 7002 / PR-6) (Agmenellum quadruplicatum).